Here is an 846-residue protein sequence, read N- to C-terminus: Major vault protein beta (846 aa).

At alanine 2 the chain carries N-acetylalanine. MVP repeat units follow at residues 2-60 (ATPV…IPPR), 61-115 (QYCI…QPVP), 116-172 (LQVI…EPVR), 173-225 (AVII…GFIQ), 226-280 (ALVL…RDIK), 281-332 (AITL…IQNV), 333-388 (NVLS…RRKR), 389-458 (IPLD…STKV), and 459-521 (ITYR…FLGP).

As to quaternary structure, the vault ribonucleoprotein particle is a huge (400 A x 670 A) cage structure of 12.9 MDa. It consists of a dimer of half-vaults, with each half-vault comprising 39 identical major vault protein (MVP) chains. Dictyostelium is one of the few organisms in which the major component is actually two proteins (alpha and beta).

The protein localises to the cytoplasm. It localises to the nucleus. In terms of biological role, unknown, though MVP-beta is required for normal vault structure. This chain is Major vault protein beta (mvpB), found in Dictyostelium discoideum (Social amoeba).